The sequence spans 212 residues: Urease accessory protein UreG (212 aa).

15 to 22 contributes to the GTP binding site; that stretch reads GPVGSGKT.

Belongs to the SIMIBI class G3E GTPase family. UreG subfamily. As to quaternary structure, homodimer. UreD, UreF and UreG form a complex that acts as a GTP-hydrolysis-dependent molecular chaperone, activating the urease apoprotein by helping to assemble the nickel containing metallocenter of UreC. The UreE protein probably delivers the nickel.

The protein localises to the cytoplasm. Its function is as follows. Facilitates the functional incorporation of the urease nickel metallocenter. This process requires GTP hydrolysis, probably effectuated by UreG. This is Urease accessory protein UreG from Opitutus terrae (strain DSM 11246 / JCM 15787 / PB90-1).